A 241-amino-acid polypeptide reads, in one-letter code: ATP-dependent Clp protease ATP-binding subunit CLPT2, chloroplastic (241 aa).

Residues 1-75 (MAAHSSCNFA…PRRIHKSAIS (75 aa)) constitute a chloroplast transit peptide. A Clp R domain is found at 91 to 237 (KPKWSWRAIK…ELESFASESG (147 aa)). Repeat stretches follow at residues 94-159 (WSWR…LGKA) and 171-237 (LTED…SESG).

Belongs to the ClpA/ClpB family. In terms of assembly, monomer and homodimer. The dimers monomerize before association to the P-ring. Component of the chloroplastic Clp protease core complex which consist of at least 16 proteins: CLPP4 (3 copies), CLPP5 (3 copies), CLPR4 (2 copies), ClpP1 (1 copy), CLPP6 (1 copy), CLPR2 (1 copy), CLPT1 (1 copy), CLPT2 (1 copy) and 3 copies of CLPP3 and/or CLPR1 and/or CLPR3. Interacts with AHK2. Interacts with CPN21. No interactions with CLPS1.

It localises to the plastid. Its subcellular location is the chloroplast. Functionally, accessory protein regulating the assembly of the plastidial Clp protease system. CLPT1 first binds to the heptameric P-ring containing the CLP3-6 subunits followed by CLPT2, and only then does the P-ring combine with the R-ring composed of the clpP1 and CLPR1-4 subunits. Once the core complex is fully assembled, it then associates to the CLPC chaperone partner to form the functional protease. CLPT2 and CLPT1 are partially redundant. This Arabidopsis thaliana (Mouse-ear cress) protein is ATP-dependent Clp protease ATP-binding subunit CLPT2, chloroplastic.